We begin with the raw amino-acid sequence, 368 residues long: F-box only protein 28 (368 aa).

Over residues 1-11 (MAAASEERMAE) the composition is skewed to basic and acidic residues. The interval 1–57 (MAAASEERMAEEGGGGHGDGGSPSAIASTQRLPPPPPPQPPQPGSQAPPAPALAPDQ) is disordered. Residues 12 to 21 (EGGGGHGDGG) are compositionally biased toward gly residues. Positions 32-52 (LPPPPPPQPPQPGSQAPPAPA) are enriched in pro residues. The region spanning 61–109 (NNTLVALPIVAIENILSFMSYDEISQLRLVCKRMDLVCQRMLNQGFLKV) is the F-box domain. 2 positions are modified to phosphoserine: S235 and S242. T270 carries the post-translational modification Phosphothreonine. The interval 328–368 (MESAVGNSSGSGQSEESPRKRKKAAEAIDSLRKSKRLRNRK) is disordered. Phosphoserine is present on S344.

In terms of assembly, part of a SCF (SKP1-cullin-F-box) protein ligase complex.

It is found in the chromosome. It localises to the centromere. The protein localises to the kinetochore. Its function is as follows. Probably recognizes and binds to some phosphorylated proteins and promotes their ubiquitination and degradation. The chain is F-box only protein 28 (FBXO28) from Bos taurus (Bovine).